Reading from the N-terminus, the 440-residue chain is Thymidine phosphorylase (440 aa).

Belongs to the thymidine/pyrimidine-nucleoside phosphorylase family. Homodimer.

It carries out the reaction thymidine + phosphate = 2-deoxy-alpha-D-ribose 1-phosphate + thymine. The protein operates within pyrimidine metabolism; dTMP biosynthesis via salvage pathway; dTMP from thymine: step 1/2. Functionally, the enzymes which catalyze the reversible phosphorolysis of pyrimidine nucleosides are involved in the degradation of these compounds and in their utilization as carbon and energy sources, or in the rescue of pyrimidine bases for nucleotide synthesis. The protein is Thymidine phosphorylase of Escherichia coli O127:H6 (strain E2348/69 / EPEC).